The following is a 97-amino-acid chain: YcgL domain-containing protein Avin_32960 (97 aa).

The YcgL domain occupies 3–87 (CICSIYKSPR…PEEEYVEHLP (85 aa)).

This chain is YcgL domain-containing protein Avin_32960, found in Azotobacter vinelandii (strain DJ / ATCC BAA-1303).